We begin with the raw amino-acid sequence, 293 residues long: Immediate early response gene 5-like protein (293 aa).

This sequence belongs to the IER family.

In Xenopus laevis (African clawed frog), this protein is Immediate early response gene 5-like protein (ier5l).